Reading from the N-terminus, the 204-residue chain is Small ribosomal subunit protein uS3 (204 aa).

A KH type-2 domain is found at 37–105 (IRSYINESFK…NVEVNVVGVK (69 aa)).

This sequence belongs to the universal ribosomal protein uS3 family. As to quaternary structure, part of the 30S ribosomal subunit. Forms a tight complex with proteins S10 and S14.

Binds the lower part of the 30S subunit head. Binds mRNA in the 70S ribosome, positioning it for translation. This Wolbachia pipientis wMel protein is Small ribosomal subunit protein uS3.